Here is a 214-residue protein sequence, read N- to C-terminus: Pyridoxine/pyridoxamine 5'-phosphate oxidase (214 aa).

Substrate-binding positions include 8-11 and lysine 66; that span reads RTNY. FMN-binding positions include 61 to 66, 76 to 77, arginine 82, lysine 83, and glutamine 105; these read RIVLIK and FT. Substrate contacts are provided by tyrosine 123, arginine 127, and serine 131. FMN contacts are provided by residues 140–141 and tryptophan 184; that span reads QS. 190–192 is a substrate binding site; that stretch reads RLH. Arginine 194 is a binding site for FMN.

Belongs to the pyridoxamine 5'-phosphate oxidase family. As to quaternary structure, homodimer. FMN serves as cofactor.

It carries out the reaction pyridoxamine 5'-phosphate + O2 + H2O = pyridoxal 5'-phosphate + H2O2 + NH4(+). It catalyses the reaction pyridoxine 5'-phosphate + O2 = pyridoxal 5'-phosphate + H2O2. The protein operates within cofactor metabolism; pyridoxal 5'-phosphate salvage; pyridoxal 5'-phosphate from pyridoxamine 5'-phosphate: step 1/1. Its pathway is cofactor metabolism; pyridoxal 5'-phosphate salvage; pyridoxal 5'-phosphate from pyridoxine 5'-phosphate: step 1/1. Its function is as follows. Catalyzes the oxidation of either pyridoxine 5'-phosphate (PNP) or pyridoxamine 5'-phosphate (PMP) into pyridoxal 5'-phosphate (PLP). The sequence is that of Pyridoxine/pyridoxamine 5'-phosphate oxidase from Burkholderia mallei (strain NCTC 10247).